Consider the following 103-residue polypeptide: Small ribosomal subunit protein uS10 (103 aa).

It belongs to the universal ribosomal protein uS10 family. As to quaternary structure, part of the 30S ribosomal subunit.

Involved in the binding of tRNA to the ribosomes. The chain is Small ribosomal subunit protein uS10 from Vibrio campbellii (strain ATCC BAA-1116).